The primary structure comprises 444 residues: Putative cytochrome P450 120 (444 aa).

Cysteine 391 is a heme binding site.

The protein belongs to the cytochrome P450 family. It depends on heme as a cofactor.

This chain is Putative cytochrome P450 120 (cyp120), found in Synechocystis sp. (strain ATCC 27184 / PCC 6803 / Kazusa).